The chain runs to 105 residues: Pyruvate synthase subunit PorD (105 aa).

4Fe-4S ferredoxin-type domains lie at 44–73 and 74–103; these read FKPEFHKDKCVRCFLCYIYCPEPAIYLDEE and GYPVFDYDYCKGCGICANECPTKAIEMVRE. [4Fe-4S] cluster contacts are provided by Cys53, Cys56, Cys59, Cys63, Cys83, Cys86, Cys89, and Cys93.

Heterotetramer of one alpha, one beta, one delta and one gamma chain. [4Fe-4S] cluster serves as cofactor.

This Pyrococcus horikoshii (strain ATCC 700860 / DSM 12428 / JCM 9974 / NBRC 100139 / OT-3) protein is Pyruvate synthase subunit PorD (porD).